Consider the following 192-residue polypeptide: Putative manganese efflux pump MntP (192 aa).

Helical transmembrane passes span 3-23 (FSAI…VAAA), 36-56 (VLLV…IGWL), 65-85 (VQAW…GKML), 112-132 (FVLA…LPML), 136-156 (FAIS…AGLF), and 171-191 (LAGG…HLVL).

The protein belongs to the MntP (TC 9.B.29) family.

The protein resides in the cell inner membrane. Its function is as follows. Probably functions as a manganese efflux pump. The protein is Putative manganese efflux pump MntP of Sorangium cellulosum (strain So ce56) (Polyangium cellulosum (strain So ce56)).